Here is a 510-residue protein sequence, read N- to C-terminus: Crotonobetaine/carnitine--CoA ligase (510 aa).

The protein belongs to the ATP-dependent AMP-binding enzyme family.

It carries out the reaction 4-(trimethylamino)butanoate + ATP + CoA = 4-(trimethylamino)butanoyl-CoA + AMP + diphosphate. The catalysed reaction is crotonobetaine + ATP + CoA = crotonobetainyl-CoA + AMP + diphosphate. It catalyses the reaction (R)-carnitine + ATP + CoA = (R)-carnitinyl-CoA + AMP + diphosphate. It participates in amine and polyamine metabolism; carnitine metabolism. Catalyzes the transfer of CoA to carnitine, generating the initial carnitinyl-CoA needed for the CaiB reaction cycle. Also has activity toward crotonobetaine and gamma-butyrobetaine. The sequence is that of Crotonobetaine/carnitine--CoA ligase from Shigella flexneri serotype 5b (strain 8401).